We begin with the raw amino-acid sequence, 85 residues long: Large ribosomal subunit protein bL27 (85 aa).

Over residues 1-11 (MASKASGGSTR) the composition is skewed to polar residues. Residues 1-20 (MASKASGGSTRNGRDSISKR) are disordered.

This sequence belongs to the bacterial ribosomal protein bL27 family.

This chain is Large ribosomal subunit protein bL27, found in Sulfurihydrogenibium sp. (strain YO3AOP1).